The primary structure comprises 495 residues: Dipeptide and tripeptide permease B (495 aa).

The Cytoplasmic segment spans residues Met1–Met16. A helical membrane pass occupies residues Ile17–Val37. Over Tyr38–Ser50 the chain is Periplasmic. Residues Phe51 to Val71 traverse the membrane as a helical segment. Over Gly72–Arg80 the chain is Cytoplasmic. The chain crosses the membrane as a helical span at residues Thr81–Leu101. The Periplasmic segment spans residues Asn102–Asn104. Residues Phe105–Ser125 form a helical membrane-spanning segment. The Cytoplasmic segment spans residues Ser126–Thr144. Residues Leu145–Ala165 traverse the membrane as a helical segment. Residues Asn166–Tyr170 lie on the Periplasmic side of the membrane. Residues Glu171–Leu191 form a helical membrane-spanning segment. Topologically, residues Arg192–Lys209 are cytoplasmic. A helical transmembrane segment spans residues Thr210 to Leu230. Position 231 (Gln231) is a topological domain, periplasmic. Residues Asn232–Leu252 traverse the membrane as a helical segment. The Cytoplasmic segment spans residues Lys253–Lys265. Residues Met266 to Met286 form a helical membrane-spanning segment. Topologically, residues Pro287–Pro309 are periplasmic. A helical transmembrane segment spans residues Val310–Leu330. Residues Tyr331–Thr348 are Cytoplasmic-facing. Residues Val349–Ala369 traverse the membrane as a helical segment. Residues Asp370–Gly373 are Periplasmic-facing. Residues Met374–Ile394 traverse the membrane as a helical segment. Residues Ser395 to Arg409 lie on the Cytoplasmic side of the membrane. A helical membrane pass occupies residues Leu410 to Gly430. Residues Tyr431 to Glu454 are Periplasmic-facing. Residues Leu455–Pro475 traverse the membrane as a helical segment. Over Lys476–Pro495 the chain is Cytoplasmic.

Belongs to the major facilitator superfamily. Proton-dependent oligopeptide transporter (POT/PTR) (TC 2.A.17) family. DtpB subfamily.

The protein resides in the cell inner membrane. In terms of biological role, proton-dependent permease that transports di- and tripeptides. The sequence is that of Dipeptide and tripeptide permease B from Aliivibrio fischeri (strain MJ11) (Vibrio fischeri).